The chain runs to 877 residues: Alanine--tRNA ligase (877 aa).

Zn(2+)-binding residues include H561, H565, C669, and H673.

It belongs to the class-II aminoacyl-tRNA synthetase family. The cofactor is Zn(2+).

Its subcellular location is the cytoplasm. The catalysed reaction is tRNA(Ala) + L-alanine + ATP = L-alanyl-tRNA(Ala) + AMP + diphosphate. Catalyzes the attachment of alanine to tRNA(Ala) in a two-step reaction: alanine is first activated by ATP to form Ala-AMP and then transferred to the acceptor end of tRNA(Ala). Also edits incorrectly charged Ser-tRNA(Ala) and Gly-tRNA(Ala) via its editing domain. This is Alanine--tRNA ligase from Endomicrobium trichonymphae.